A 382-amino-acid polypeptide reads, in one-letter code: uncharacterized protein (382 aa).

Residues 1–21 form a helical membrane-spanning segment; sequence MKIILVVFVLIFVGVIGFNMI.

This sequence belongs to the membrane fusion protein (MFP) (TC 8.A.1) family.

The protein localises to the membrane. This is an uncharacterized protein from Haemophilus influenzae (strain ATCC 51907 / DSM 11121 / KW20 / Rd).